A 27-amino-acid polypeptide reads, in one-letter code: Caerulein precursor fragment R4 (27 aa).

In terms of tissue distribution, expressed by the skin glands.

The protein localises to the secreted. Functionally, antimicrobial peptide. This Xenopus ruwenzoriensis (Uganda clawed frog) protein is Caerulein precursor fragment R4.